Here is a 596-residue protein sequence, read N- to C-terminus: Selenocysteine-specific elongation factor (596 aa).

In terms of domain architecture, tr-type G spans 5 to 217; that stretch reads RVNVNVGVLG…LLTSQISIPT (213 aa). Residues 14–21 form a G1 region; sequence GHIDSGKT. GDP contacts are provided by glycine 19, threonine 21, and alanine 22. Glycine 19, threonine 21, and alanine 22 together coordinate GTP. Residue threonine 21 participates in Mg(2+) binding. Residues 46–50 form a G2 region; sequence GITLD. Positions 48 and 92 each coordinate Mg(2+). Residues 92 to 95 form a G3 region; the sequence is DCPG. A G4 region spans residues 146 to 149; sequence NKID. Residues aspartate 149 and lysine 187 each contribute to the GDP site. GTP-binding residues include aspartate 149 and lysine 187. The segment at 185–187 is G5; that stretch reads AAK. Serine 537 carries the phosphoserine modification. Threonine 545 is modified (phosphothreonine). Residues 547-553 carry the Nuclear localization signal motif; that stretch reads ALKKRAR. Residues 548 to 573 are disordered; sequence LKKRARAGRGEATRQEESAERSEPSQ. Basic and acidic residues predominate over residues 555-571; that stretch reads GRGEATRQEESAERSEP. Residue arginine 556 is modified to Omega-N-methylarginine.

This sequence belongs to the TRAFAC class translation factor GTPase superfamily. Classic translation factor GTPase family. SelB subfamily. Mg(2+) is required as a cofactor. The cofactor is Mn(2+).

It is found in the cytoplasm. Its subcellular location is the nucleus. It carries out the reaction GTP + H2O = GDP + phosphate + H(+). Translation factor required for the incorporation of the rare amino acid selenocysteine encoded by UGA codons. Replaces the eRF1-eRF3-GTP ternary complex for the insertion of selenocysteine directed by the UGA codon. Insertion of selenocysteine at UGA codons is mediated by SECISBP2 and EEFSEC: SECISBP2 (1) specifically binds the SECIS sequence once the 80S ribosome encounters an in-frame UGA codon and (2) contacts the RPS27A/eS31 of the 40S ribosome before ribosome stalling. (3) GTP-bound EEFSEC then delivers selenocysteinyl-tRNA(Sec) to the 80S ribosome and adopts a preaccommodated state conformation. (4) After GTP hydrolysis, EEFSEC dissociates from the assembly, selenocysteinyl-tRNA(Sec) accommodates, and peptide bond synthesis and selenoprotein elongation occur. This chain is Selenocysteine-specific elongation factor, found in Homo sapiens (Human).